A 1706-amino-acid chain; its full sequence is Serine/threonine-protein kinase vps15 (1706 aa).

Positions 24–293 (YHNERSLGDS…YLQKYRGTVF (270 aa)) constitute a Protein kinase domain. Residues 30–38 (LGDSHFLRT) and Lys52 each bind ATP. One copy of the HEAT 1 repeat lies at 56–94 (NKLPEISLSSIVNLLKEEQENISYRVPNAVPYIKTLVTL). Catalysis depends on Asp146, which acts as the Proton acceptor. HEAT repeat units follow at residues 426–465 (LYGAAVLLPIVLSTIRHVNTRESKINALSLVQILSRNICD), 466–504 (ESKLDTVLPFVMTLLRDQYADVRISALITITRLVSNVTS), 511–549 (FLFQEYLFPDLQHFLFDMNSRTRATYASCLPILAKQASK), 587–625 (HDLVVTVERHVSTLLADSSSIVRRSLLNALAPLCVFFGK), 626–664 (AKSNDLILSHLITYLNDTDWMLRCAFFESITGLSIFIGP), 665–703 (RSVDEYILPLMLQALVDPEPAVLESVLGSFSGLIELHLF), and 705–743 (KLVVVDILQLVLPLVAVPNAYIRRAALSVIYSAYQSFDD). A Phosphoserine modification is found at Ser957. Tyr958 carries the phosphotyrosine modification. The segment at 982–1099 (TTKPKDVSQS…GKSLAPLISS (118 aa)) is disordered. 2 stretches are compositionally biased toward basic and acidic residues: residues 984–1002 (KPKDVSQSDIKVDINRESN) and 1014–1023 (DVYRQTDNPE). The segment covering 1029 to 1055 (DTASSKVDTHNPTVTQPTDDTGGLNSY) has biased composition (polar residues). The segment covering 1056–1069 (NTENPLLTNNTLEP) has biased composition (low complexity). Residues 1079-1090 (KDSDKHAKESKG) show a composition bias toward basic and acidic residues. WD repeat units lie at residues 1213 to 1252 (LLDGGTKKVLVSPDSSFFVTLGSDGVVRAWQLVESVRHIS) and 1368 to 1407 (LQCGSATSVVVSEGCNWALIGTTKGWLLLWDLRFGTLSCS). Positions 1431–1442 (NEYTSGNNNSPV) are enriched in polar residues. The tract at residues 1431-1461 (NEYTSGNNNSPVTKVPGSSSTSSSSTQPINS) is disordered. One copy of the WD 3 repeat lies at 1577–1622 (CISSPIYRYRGPSAGSVEREPLFLIAASGSPHAFIWNPHNVSASSS).

The protein belongs to the protein kinase superfamily. Ser/Thr protein kinase family. As to quaternary structure, component of the autophagy-specific vps34 PI3-kinase complex I composed of vps15, atg6, pik3/vps34, atg14 and atg38. Also a component of the vps34 PI3-kinase complex II composed of atg6, pik3, vps15 and vps38.

The catalysed reaction is L-seryl-[protein] + ATP = O-phospho-L-seryl-[protein] + ADP + H(+). It carries out the reaction L-threonyl-[protein] + ATP = O-phospho-L-threonyl-[protein] + ADP + H(+). In terms of biological role, functions as a part of the autophagy-specific VPS34 PI3-kinase complex I that plays a role in autophagosome assembly. This complex is essential to recruit the atg8-phosphatidylinositol conjugate and the atg12-atg5 conjugate to the pre-autophagosomal structure. Also functions as part of the VPS34 PI3-kinase complex II. The sequence is that of Serine/threonine-protein kinase vps15 from Schizosaccharomyces pombe (strain 972 / ATCC 24843) (Fission yeast).